The sequence spans 494 residues: Costunolide synthase (494 aa).

A helical membrane pass occupies residues 3–23 (PLTIVSLVVASLFLFAFWALS). Residue cysteine 432 participates in heme binding.

The protein belongs to the cytochrome P450 family. It depends on heme as a cofactor.

The protein resides in the membrane. The enzyme catalyses germacra-1(10),4,11(13)-trien-12-oate + reduced [NADPH--hemoprotein reductase] + O2 = (+)-costunolide + oxidized [NADPH--hemoprotein reductase] + 2 H2O. Its function is as follows. Hydroxylates germacrene A acid to 6-alpha-hydroxy-germacrne A acid, a precursor of sesquiterpene lactones that spontaneously undergoes a lactonization which yields costunolide. Costunolide can then spontaneously conjugate to glutathione or cysteine. This is Costunolide synthase (CYP71BL3) from Cichorium intybus (Chicory).